The sequence spans 201 residues: MEQTEVMKPETLEDLIKTLHQIFQSDSINVEEVQNLMESYQSNPQDWMKFAKFDQYRYTRNLVDEGNGKFNLMILCWGEGHGSSIHDHTDSHCFLKLLQGQLKETLFDWPDRKLQSGMKPRGQSVLQENQCAYINDSLGLHRVENVSHTEPAVSLHLYSPPFQSCRTFDQRTGHHNTVKMTFWSKYGERTPYELSVSQENN.

Residues histidine 86, histidine 88, and histidine 141 each contribute to the Fe cation site. Positions 93-158 (CFLKLLQGQL…TEPAVSLHLY (66 aa)) form a cross-link, 3'-(S-cysteinyl)-tyrosine (Cys-Tyr).

It belongs to the cysteine dioxygenase family. As to quaternary structure, monomer. It depends on Fe cation as a cofactor. Ni(2+) serves as cofactor. Requires Zn(2+) as cofactor. In terms of processing, the thioether cross-link between Cys-93 and Tyr-158 plays a structural role through stabilizing the Fe(2+) ion, and prevents the production of highly damaging free hydroxyl radicals by holding the oxygen radical via hydroxyl hydrogen.

It catalyses the reaction L-cysteine + O2 = 3-sulfino-L-alanine + H(+). It participates in organosulfur biosynthesis; taurine biosynthesis; hypotaurine from L-cysteine: step 1/2. Its function is as follows. Catalyzes the oxidation of cysteine to cysteine sulfinic acid with addition of molecular dioxygen. This chain is Cysteine dioxygenase type 1 (cdo1), found in Danio rerio (Zebrafish).